The chain runs to 360 residues: Peptide chain release factor 1 (360 aa).

Q236 carries the N5-methylglutamine modification.

The protein belongs to the prokaryotic/mitochondrial release factor family. Methylated by PrmC. Methylation increases the termination efficiency of RF1.

It is found in the cytoplasm. Its function is as follows. Peptide chain release factor 1 directs the termination of translation in response to the peptide chain termination codons UAG and UAA. The polypeptide is Peptide chain release factor 1 (Limosilactobacillus reuteri subsp. reuteri (strain JCM 1112) (Lactobacillus reuteri)).